We begin with the raw amino-acid sequence, 320 residues long: Malate dehydrogenase (320 aa).

NAD(+) is bound by residues 10–15 (GSGMIG) and aspartate 34. Residues arginine 83 and arginine 89 each contribute to the substrate site. Residues asparagine 96 and 119–121 (ITN) contribute to the NAD(+) site. 2 residues coordinate substrate: asparagine 121 and arginine 152. Histidine 176 serves as the catalytic Proton acceptor.

Belongs to the LDH/MDH superfamily. MDH type 3 family.

It carries out the reaction (S)-malate + NAD(+) = oxaloacetate + NADH + H(+). Functionally, catalyzes the reversible oxidation of malate to oxaloacetate. This chain is Malate dehydrogenase, found in Rhizobium rhizogenes (strain K84 / ATCC BAA-868) (Agrobacterium radiobacter).